The primary structure comprises 539 residues: Phosphoenolpyruvate carboxykinase (ATP) (539 aa).

Substrate contacts are provided by arginine 64, tyrosine 206, and lysine 212. ATP contacts are provided by residues lysine 212, histidine 231, and 247–255 (GLSGTGKTT). Residues lysine 212 and histidine 231 each coordinate Mn(2+). Mn(2+) is bound at residue aspartate 268. Residues glutamate 296, arginine 332, 448–449 (RI), and threonine 454 contribute to the ATP site. Arginine 332 serves as a coordination point for substrate.

It belongs to the phosphoenolpyruvate carboxykinase (ATP) family. Monomer. Mn(2+) serves as cofactor.

The protein localises to the cytoplasm. The catalysed reaction is oxaloacetate + ATP = phosphoenolpyruvate + ADP + CO2. The protein operates within carbohydrate biosynthesis; gluconeogenesis. In terms of biological role, involved in the gluconeogenesis. Catalyzes the conversion of oxaloacetate (OAA) to phosphoenolpyruvate (PEP) through direct phosphoryl transfer between the nucleoside triphosphate and OAA. This chain is Phosphoenolpyruvate carboxykinase (ATP), found in Citrobacter koseri (strain ATCC BAA-895 / CDC 4225-83 / SGSC4696).